A 474-amino-acid chain; its full sequence is Proline--tRNA ligase (474 aa).

It belongs to the class-II aminoacyl-tRNA synthetase family. ProS type 3 subfamily. In terms of assembly, homodimer.

The protein resides in the cytoplasm. The enzyme catalyses tRNA(Pro) + L-proline + ATP = L-prolyl-tRNA(Pro) + AMP + diphosphate. In terms of biological role, catalyzes the attachment of proline to tRNA(Pro) in a two-step reaction: proline is first activated by ATP to form Pro-AMP and then transferred to the acceptor end of tRNA(Pro). The protein is Proline--tRNA ligase of Aster yellows witches'-broom phytoplasma (strain AYWB).